We begin with the raw amino-acid sequence, 442 residues long: 3-isopropylmalate dehydratase large subunit (442 aa).

Positions 347, 407, and 410 each coordinate [4Fe-4S] cluster.

Belongs to the aconitase/IPM isomerase family. LeuC type 1 subfamily. Heterodimer of LeuC and LeuD. The cofactor is [4Fe-4S] cluster.

It carries out the reaction (2R,3S)-3-isopropylmalate = (2S)-2-isopropylmalate. Its pathway is amino-acid biosynthesis; L-leucine biosynthesis; L-leucine from 3-methyl-2-oxobutanoate: step 2/4. In terms of biological role, catalyzes the isomerization between 2-isopropylmalate and 3-isopropylmalate, via the formation of 2-isopropylmaleate. The protein is 3-isopropylmalate dehydratase large subunit of Buchnera aphidicola subsp. Uroleucon solidaginis.